Consider the following 353-residue polypeptide: Photosystem II protein D1 (353 aa).

The residue at position 2 (threonine 2) is an N-acetylthreonine. Threonine 2 is subject to Phosphothreonine. 3 consecutive transmembrane segments (helical) span residues tyrosine 29–serine 46, histidine 118–leucine 133, and tryptophan 142–alanine 156. Histidine 118 is a chlorophyll a binding site. Pheophytin a is bound at residue tyrosine 126. Residues aspartate 170 and glutamate 189 each coordinate [CaMn4O5] cluster. The helical transmembrane segment at phenylalanine 197–leucine 218 threads the bilayer. Residue histidine 198 coordinates chlorophyll a. A quinone is bound by residues histidine 215 and serine 264–phenylalanine 265. Histidine 215 provides a ligand contact to Fe cation. Histidine 272 is a binding site for Fe cation. Residues phenylalanine 274 to leucine 288 traverse the membrane as a helical segment. [CaMn4O5] cluster contacts are provided by histidine 332, glutamate 333, aspartate 342, and alanine 344. Positions serine 345–alanine 353 are excised as a propeptide.

The protein belongs to the reaction center PufL/M/PsbA/D family. In terms of assembly, PSII is composed of 1 copy each of membrane proteins PsbA, PsbB, PsbC, PsbD, PsbE, PsbF, PsbH, PsbI, PsbJ, PsbK, PsbL, PsbM, PsbT, PsbX, PsbY, PsbZ, Psb30/Ycf12, at least 3 peripheral proteins of the oxygen-evolving complex and a large number of cofactors. It forms dimeric complexes. Requires The D1/D2 heterodimer binds P680, chlorophylls that are the primary electron donor of PSII, and subsequent electron acceptors. It shares a non-heme iron and each subunit binds pheophytin, quinone, additional chlorophylls, carotenoids and lipids. D1 provides most of the ligands for the Mn4-Ca-O5 cluster of the oxygen-evolving complex (OEC). There is also a Cl(-1) ion associated with D1 and D2, which is required for oxygen evolution. The PSII complex binds additional chlorophylls, carotenoids and specific lipids. as cofactor. Post-translationally, tyr-161 forms a radical intermediate that is referred to as redox-active TyrZ, YZ or Y-Z. In terms of processing, C-terminally processed by CTPA; processing is essential to allow assembly of the oxygen-evolving complex and thus photosynthetic growth.

The protein resides in the plastid. The protein localises to the chloroplast thylakoid membrane. It catalyses the reaction 2 a plastoquinone + 4 hnu + 2 H2O = 2 a plastoquinol + O2. In terms of biological role, photosystem II (PSII) is a light-driven water:plastoquinone oxidoreductase that uses light energy to abstract electrons from H(2)O, generating O(2) and a proton gradient subsequently used for ATP formation. It consists of a core antenna complex that captures photons, and an electron transfer chain that converts photonic excitation into a charge separation. The D1/D2 (PsbA/PsbD) reaction center heterodimer binds P680, the primary electron donor of PSII as well as several subsequent electron acceptors. This chain is Photosystem II protein D1, found in Angiopteris evecta (Mule's foot fern).